A 685-amino-acid polypeptide reads, in one-letter code: Probable transcriptional regulator SLK3 (685 aa).

Disordered stretches follow at residues 25–66 (NLPG…ENSY) and 108–129 (LQQQRVRQHQQMLQSMSPSQRL). The span at 39-56 (QHLPQQQQRQLLEQQAGQ) shows a compositional bias: low complexity. Residues 176–423 (PAENCITYWR…EHKVGPLEGL (248 aa)) form a dimerization region. The short motif at 185 to 199 (RKFVAEYFSPRAKQR) is the Nuclear localization signal element. A compositionally biased stretch (polar residues) spans 447 to 459 (GNSGAMSGPAQAQ). 3 disordered regions span residues 447-491 (GNSG…MNGS), 512-591 (NNQN…NTQE), and 611-658 (QQQA…NNLP). Over residues 460 to 471 (MTLSSGTMSGST) the composition is skewed to low complexity. A compositionally biased stretch (polar residues) spans 512-524 (NNQNSNTGNQEGF). Residues 525–543 (SSQNPTLNSNQSPSSSSQQ) show a composition bias toward low complexity. Composition is skewed to polar residues over residues 544–588 (RENL…SHGN), 611–636 (QQQAFPGQSGSNNNTERNTTASTSNI), and 645–658 (RINSFKASSNNNLP).

It belongs to the adn1/SEU family.

The protein resides in the nucleus. In terms of biological role, probable transcription regulator that functions in the development of the carpel margin meristem similarly to SEUSS (SEU). In association with SEU, supports organ development from meristematic regions by facilitating auxin response and thus organ initiation, and by sustaining meristematic potential through the maintenance of PHABULOSA expression. The polypeptide is Probable transcriptional regulator SLK3 (SLK3) (Arabidopsis thaliana (Mouse-ear cress)).